Here is a 258-residue protein sequence, read N- to C-terminus: Tetraspanin-18B (258 aa).

Residues 1 to 25 (MGLGEASARGTSMEGDCLSCIKYLM) are Cytoplasmic-facing. The chain crosses the membrane as a helical span at residues 26–46 (FVFNFLIFLGGSFLLGVGVWV). Over 47-61 (VVDPTGFREIVAANP) the chain is Extracellular. The chain crosses the membrane as a helical span at residues 62 to 82 (LLFTGVYIILAMGGMLFLLGF). At 83–94 (LGCCGAIRENKC) the chain is on the cytoplasmic side. The chain crosses the membrane as a helical span at residues 95–115 (LLLFFFMLILIIFLAELAAAI). The Extracellular portion of the chain corresponds to 116-228 (LAFIFREHLT…SAVVDYFEMY (113 aa)). The N-linked (GlcNAc...) asparagine glycan is linked to N141. The helical transmembrane segment at 229 to 249 (IYVAGALAIVVLTIELFAMVF) threads the bilayer. At 250–258 (AMCLFRGIQ) the chain is on the cytoplasmic side.

This sequence belongs to the tetraspanin (TM4SF) family.

It localises to the membrane. In terms of biological role, may regulate angiogenesis through KDR/VEGFR2 and NOTCH1 pathways. In Danio rerio (Zebrafish), this protein is Tetraspanin-18B (tspan18b).